The sequence spans 485 residues: Glutamyl-tRNA(Gln) amidotransferase subunit A (485 aa).

Active-site charge relay system residues include Lys79 and Ser154. The active-site Acyl-ester intermediate is Ser178.

Belongs to the amidase family. GatA subfamily. Heterotrimer of A, B and C subunits.

The catalysed reaction is L-glutamyl-tRNA(Gln) + L-glutamine + ATP + H2O = L-glutaminyl-tRNA(Gln) + L-glutamate + ADP + phosphate + H(+). Its function is as follows. Allows the formation of correctly charged Gln-tRNA(Gln) through the transamidation of misacylated Glu-tRNA(Gln) in organisms which lack glutaminyl-tRNA synthetase. The reaction takes place in the presence of glutamine and ATP through an activated gamma-phospho-Glu-tRNA(Gln). This is Glutamyl-tRNA(Gln) amidotransferase subunit A from Geobacillus kaustophilus (strain HTA426).